The chain runs to 557 residues: Dihydroxy-acid dehydratase (557 aa).

Mg(2+) is bound at residue Asp78. Cys119 serves as a coordination point for [2Fe-2S] cluster. Mg(2+)-binding residues include Asp120 and Lys121. Lys121 bears the N6-carboxylysine mark. A [2Fe-2S] cluster-binding site is contributed by Cys192. Mg(2+) is bound at residue Glu442. Catalysis depends on Ser468, which acts as the Proton acceptor.

Belongs to the IlvD/Edd family. As to quaternary structure, homodimer. [2Fe-2S] cluster serves as cofactor. Mg(2+) is required as a cofactor.

It catalyses the reaction (2R)-2,3-dihydroxy-3-methylbutanoate = 3-methyl-2-oxobutanoate + H2O. The catalysed reaction is (2R,3R)-2,3-dihydroxy-3-methylpentanoate = (S)-3-methyl-2-oxopentanoate + H2O. The protein operates within amino-acid biosynthesis; L-isoleucine biosynthesis; L-isoleucine from 2-oxobutanoate: step 3/4. It participates in amino-acid biosynthesis; L-valine biosynthesis; L-valine from pyruvate: step 3/4. Functions in the biosynthesis of branched-chain amino acids. Catalyzes the dehydration of (2R,3R)-2,3-dihydroxy-3-methylpentanoate (2,3-dihydroxy-3-methylvalerate) into 2-oxo-3-methylpentanoate (2-oxo-3-methylvalerate) and of (2R)-2,3-dihydroxy-3-methylbutanoate (2,3-dihydroxyisovalerate) into 2-oxo-3-methylbutanoate (2-oxoisovalerate), the penultimate precursor to L-isoleucine and L-valine, respectively. This chain is Dihydroxy-acid dehydratase, found in Bacillus cereus (strain G9842).